Consider the following 335-residue polypeptide: Ketol-acid reductoisomerase (NADP(+)) (335 aa).

Residues 5–185 form the KARI N-terminal Rossmann domain; it reads SKIYTDKDSN…GATRAGVIPT (181 aa). NADP(+) contacts are provided by residues 28–31, S56, and 86–89; these read YGSQ and DMVQ. The active site involves H111. G137 provides a ligand contact to NADP(+). Residues 186-331 form the KARI C-terminal knotted domain; that stretch reads TFKEETETDL…NQLKDLIQKG (146 aa). Residues D194, E198, E230, and E234 each coordinate Mg(2+). S255 serves as a coordination point for substrate.

Belongs to the ketol-acid reductoisomerase family. The cofactor is Mg(2+).

The catalysed reaction is (2R)-2,3-dihydroxy-3-methylbutanoate + NADP(+) = (2S)-2-acetolactate + NADPH + H(+). It carries out the reaction (2R,3R)-2,3-dihydroxy-3-methylpentanoate + NADP(+) = (S)-2-ethyl-2-hydroxy-3-oxobutanoate + NADPH + H(+). It participates in amino-acid biosynthesis; L-isoleucine biosynthesis; L-isoleucine from 2-oxobutanoate: step 2/4. The protein operates within amino-acid biosynthesis; L-valine biosynthesis; L-valine from pyruvate: step 2/4. Involved in the biosynthesis of branched-chain amino acids (BCAA). Catalyzes an alkyl-migration followed by a ketol-acid reduction of (S)-2-acetolactate (S2AL) to yield (R)-2,3-dihydroxy-isovalerate. In the isomerase reaction, S2AL is rearranged via a Mg-dependent methyl migration to produce 3-hydroxy-3-methyl-2-ketobutyrate (HMKB). In the reductase reaction, this 2-ketoacid undergoes a metal-dependent reduction by NADPH to yield (R)-2,3-dihydroxy-isovalerate. In Saccharolobus islandicus (strain Y.G.57.14 / Yellowstone #1) (Sulfolobus islandicus), this protein is Ketol-acid reductoisomerase (NADP(+)).